We begin with the raw amino-acid sequence, 518 residues long: Putative cysteine ligase BshC (518 aa).

A coiled-coil region spans residues 404 to 474 (AAASAERLAA…RARQLTRLKR (71 aa)).

Belongs to the BshC family.

The protein is Putative cysteine ligase BshC of Deinococcus geothermalis (strain DSM 11300 / CIP 105573 / AG-3a).